Reading from the N-terminus, the 91-residue chain is Teretoxin Tan22.13 (91 aa).

A signal peptide spans 1-21 (MKVQILFALMMVLVTLCLGQK). A propeptide spanning residues 22 to 24 (MQR) is cleaved from the precursor.

Belongs to the teretoxin C (TC) superfamily. In terms of processing, contains 4 disulfide bonds. Expressed by the venom duct.

The protein localises to the secreted. The chain is Teretoxin Tan22.13 from Terebra anilis (Auger snail).